Consider the following 382-residue polypeptide: Chaperone protein DnaJ (382 aa).

The region spanning 5-70 (DYYDLLGLSK…DKRAAYDRYG (66 aa)) is the J domain. The CR-type zinc finger occupies 138 to 216 (GTKVPINYVT…CSGSGRVRDE (79 aa)). Zn(2+) is bound by residues C151, C154, C168, C171, C190, C193, C204, and C207. CXXCXGXG motif repeat units follow at residues 151–158 (CSSCSGSG), 168–175 (CNTCHGAG), 190–197 (CHVCNGEG), and 204–211 (CKKCSGSG).

The protein belongs to the DnaJ family. Homodimer. It depends on Zn(2+) as a cofactor.

It is found in the cytoplasm. Participates actively in the response to hyperosmotic and heat shock by preventing the aggregation of stress-denatured proteins and by disaggregating proteins, also in an autonomous, DnaK-independent fashion. Unfolded proteins bind initially to DnaJ; upon interaction with the DnaJ-bound protein, DnaK hydrolyzes its bound ATP, resulting in the formation of a stable complex. GrpE releases ADP from DnaK; ATP binding to DnaK triggers the release of the substrate protein, thus completing the reaction cycle. Several rounds of ATP-dependent interactions between DnaJ, DnaK and GrpE are required for fully efficient folding. Also involved, together with DnaK and GrpE, in the DNA replication of plasmids through activation of initiation proteins. This is Chaperone protein DnaJ from Ehrlichia ruminantium (strain Welgevonden).